Consider the following 280-residue polypeptide: Dual adapter for phosphotyrosine and 3-phosphotyrosine and 3-phosphoinositide (280 aa).

The segment at 1-20 (MGRAELLEGKMSTQDPSDLW) is disordered. Residues 35–129 (WYHGNLTRHA…GTLMVLKHPY (95 aa)) enclose the SH2 domain. Residue tyrosine 139 is modified to Phosphotyrosine. The residue at position 141 (serine 141) is a Phosphoserine. Positions 164–259 (LGTKEGYLTK…WIKILRWKLS (96 aa)) constitute a PH domain.

Interacts with PtdIns(3,4,5)P3 and PLCG2. In vitro, interacts with PtdIns(3,4)P2. Phosphorylated on tyrosine residues. In terms of tissue distribution, highly expressed in placenta and lung, followed by brain, heart, kidney, liver, pancreas and skeletal muscle. Expressed by B-lymphocytes, but not T-lymphocytes or nonhematopoietic cells.

The protein localises to the cytoplasm. It is found in the membrane. May act as a B-cell-associated adapter that regulates B-cell antigen receptor (BCR)-signaling downstream of PI3K. This chain is Dual adapter for phosphotyrosine and 3-phosphotyrosine and 3-phosphoinositide (DAPP1), found in Homo sapiens (Human).